A 281-amino-acid chain; its full sequence is Lectin alpha chain (281 aa).

N-linked (GlcNAc...) asparagine glycosylation is found at asparagine 35, asparagine 82, and asparagine 140.

The protein belongs to the leguminous lectin family. Tetramer of 2 alpha and 2 beta chains. Post-translationally, glycosylated. The beta chain is produced by partial proteolytic processing of the alpha chain.

Its function is as follows. D-galactose-binding lectin. The chain is Lectin alpha chain from Lablab purpureus (Hyacinth bean).